The primary structure comprises 480 residues: Protein nucleotidyltransferase YdiU (480 aa).

ATP contacts are provided by glycine 86, glycine 88, arginine 89, lysine 109, aspartate 121, glycine 122, arginine 172, and arginine 179. Aspartate 248 (proton acceptor) is an active-site residue. The Mg(2+) site is built by asparagine 249 and aspartate 258. Residue aspartate 258 coordinates ATP.

It belongs to the SELO family. The cofactor is Mg(2+). Mn(2+) serves as cofactor.

The enzyme catalyses L-seryl-[protein] + ATP = 3-O-(5'-adenylyl)-L-seryl-[protein] + diphosphate. It catalyses the reaction L-threonyl-[protein] + ATP = 3-O-(5'-adenylyl)-L-threonyl-[protein] + diphosphate. It carries out the reaction L-tyrosyl-[protein] + ATP = O-(5'-adenylyl)-L-tyrosyl-[protein] + diphosphate. The catalysed reaction is L-histidyl-[protein] + UTP = N(tele)-(5'-uridylyl)-L-histidyl-[protein] + diphosphate. The enzyme catalyses L-seryl-[protein] + UTP = O-(5'-uridylyl)-L-seryl-[protein] + diphosphate. It catalyses the reaction L-tyrosyl-[protein] + UTP = O-(5'-uridylyl)-L-tyrosyl-[protein] + diphosphate. Nucleotidyltransferase involved in the post-translational modification of proteins. It can catalyze the addition of adenosine monophosphate (AMP) or uridine monophosphate (UMP) to a protein, resulting in modifications known as AMPylation and UMPylation. The polypeptide is Protein nucleotidyltransferase YdiU (Salmonella choleraesuis (strain SC-B67)).